The chain runs to 149 residues: Sec-independent protein translocase protein TatB (149 aa).

The chain crosses the membrane as a helical span at residues 1–21; the sequence is MFDIGFTELIVIGIVALVVVG. The interval 92-149 is disordered; it reads VDMLDKSVRNEPQNAQTPPQTADAEPAQPDVRQQTLPLEEPDQNRAAGEPSSTSTRPA. Over residues 101-111 the composition is skewed to polar residues; the sequence is NEPQNAQTPPQ.

Belongs to the TatB family. The Tat system comprises two distinct complexes: a TatABC complex, containing multiple copies of TatA, TatB and TatC subunits, and a separate TatA complex, containing only TatA subunits. Substrates initially bind to the TatABC complex, which probably triggers association of the separate TatA complex to form the active translocon.

Its subcellular location is the cell inner membrane. Its function is as follows. Part of the twin-arginine translocation (Tat) system that transports large folded proteins containing a characteristic twin-arginine motif in their signal peptide across membranes. Together with TatC, TatB is part of a receptor directly interacting with Tat signal peptides. TatB may form an oligomeric binding site that transiently accommodates folded Tat precursor proteins before their translocation. In Thiobacillus denitrificans (strain ATCC 25259 / T1), this protein is Sec-independent protein translocase protein TatB.